The chain runs to 418 residues: Phosphoglycerate kinase (418 aa).

(2R)-3-phosphoglycerate is bound by residues Val23, Asp24, Phe25, Asn26, Gln39, Arg40, Ser63, His64, Gly66, Arg67, Leu122, Arg123, His170, and Arg171. ADP is bound at residue Gly214. Gly214 contacts CDP. AMP-binding residues include Ala215 and Lys216. Ala215 serves as a coordination point for ATP. Ala215 serves as a coordination point for Mg(2+). Asp219 contacts CDP. Asp219 serves as a coordination point for Mg(2+). AMP is bound at residue Lys220. Lys220 provides a ligand contact to ATP. ADP is bound at residue Gly238. Gly238 serves as a coordination point for CDP. Positions 239 and 313 each coordinate AMP. ATP is bound by residues Gly239 and Gly313. The CDP site is built by Gly338, Ala340, and Phe343. Phe343 is an ADP binding site. Glu344 contacts AMP. ATP-binding residues include Glu344, Asp375, and Thr376. Asp375 contributes to the Mg(2+) binding site.

This sequence belongs to the phosphoglycerate kinase family. In terms of assembly, monomer. The cofactor is Mg(2+).

Its subcellular location is the cytoplasm. It is found in the mitochondrion. It catalyses the reaction (2R)-3-phosphoglycerate + ATP = (2R)-3-phospho-glyceroyl phosphate + ADP. The protein operates within carbohydrate degradation; glycolysis; pyruvate from D-glyceraldehyde 3-phosphate: step 2/5. Catalyzes one of the two ATP producing reactions in the glycolytic pathway via the reversible conversion of 1,3-diphosphoglycerate to 3-phosphoglycerate. Both L- and D- forms of purine and pyrimidine nucleotides can be used as substrates, but the activity is much lower on pyrimidines. Negatively regulates the biosynthesis of acetyl-CoA from pyruvate in the mitochondrion. This chain is Phosphoglycerate kinase (pgk-1), found in Neurospora crassa (strain ATCC 24698 / 74-OR23-1A / CBS 708.71 / DSM 1257 / FGSC 987).